The following is a 163-amino-acid chain: Cyanate hydratase (163 aa).

Active-site residues include Arg103, Glu106, and Ser129.

Belongs to the cyanase family.

It carries out the reaction cyanate + hydrogencarbonate + 3 H(+) = NH4(+) + 2 CO2. In terms of biological role, catalyzes the reaction of cyanate with bicarbonate to produce ammonia and carbon dioxide. This chain is Cyanate hydratase, found in Ajellomyces capsulatus (strain H143) (Darling's disease fungus).